Consider the following 318-residue polypeptide: 2-oxoacid:ferredoxin oxidoreductase 1, subunit beta (318 aa).

The [4Fe-4S] cluster site is built by C18, C21, and C52. Residues 50-53 (IGCS) and H69 contribute to the thiamine diphosphate site. D94 contacts Mg(2+). Position 95–96 (95–96 (GD)) interacts with thiamine diphosphate. Residues N122 and V124 each contribute to the Mg(2+) site. 126–127 (GL) contacts thiamine diphosphate. A [4Fe-4S] cluster-binding site is contributed by C201.

As to quaternary structure, heterodimer composed of an alpha and a beta subunit. The cofactor is [4Fe-4S] cluster. Thiamine diphosphate serves as cofactor. It depends on Mg(2+) as a cofactor.

It carries out the reaction a 2-oxocarboxylate + 2 oxidized [2Fe-2S]-[ferredoxin] + CoA = an acyl-CoA + 2 reduced [2Fe-2S]-[ferredoxin] + CO2 + H(+). Catalyzes the coenzyme A-dependent oxidative decarboxylation of different 2-oxoacids such as pyruvate, 2-oxobutyrate and glyoxylate to form their CoA derivatives. This chain is 2-oxoacid:ferredoxin oxidoreductase 1, subunit beta, found in Aeropyrum pernix (strain ATCC 700893 / DSM 11879 / JCM 9820 / NBRC 100138 / K1).